Consider the following 88-residue polypeptide: Small ribosomal subunit protein bS16 (88 aa).

Belongs to the bacterial ribosomal protein bS16 family.

This chain is Small ribosomal subunit protein bS16, found in Symbiobacterium thermophilum (strain DSM 24528 / JCM 14929 / IAM 14863 / T).